The sequence spans 703 residues: MERSESVDEDVQASAYLENDEVRERDDPMSDTLRIGEEALVCSSEHEIDVGFCQNEERKSEEETMGGFDEQSGLLVDERKEFDAPAVGMEFESYDDAYNYYNCYASEVGFRVRVKNSWFKRRSKEKYGAVLCCSSQGFKRINDVNRVRKETRTGCPAMIRMRQVDSKRWRVVEVTLDHNHLLGCKLYKSVKRKRKCVSSPVSDAKTIKLYRACVVDNGSNVNPNSTLNKKFQNSTGSPDLLNLKRGDSAAIYNYFCRMQLTNPNFFYLMDVNDEGQLRNVFWADAFSKVSCSYFGDVIFIDSSYISGKFEIPLVTFTGVNHHGKTTLLSCGFLAGETMESYHWLLKVWLSVMKRSPQTIVTDRCKPLEAAISQVFPRSHQRFSLTHIMRKIPEKLGGLHNYDAVRKAFTKAVYETLKVVEFEAAWGFMVHNFGVIENEWLRSLYEERAKWAPVYLKDTFFAGIAAAHPGETLKPFFERYVHKQTPLKEFLDKYELALQKKHREETLSDIESQTLNTAELKTKCSFETQLSRIYTRDMFKKFQIEVEEMYSCFSTTQVHVDGPFVIFLVKERVRGESSRREIRDFEVLYNRSVGEVRCICSCFNFYGYLCRHALCVLNFNGVEEIPLRYILPRWRKDYKRLHFADNGLTGFVDGTDRVQWFDQLYKNSLQVVEEGAVSLDHYKVAMQVLQESLDKVHSVEEKQD.

The interval 1–29 (MERSESVDEDVQASAYLENDEVRERDDPM) is disordered. Residues 99-184 (NYYNCYASEV…TLDHNHLLGC (86 aa)) form the FAR1 domain. Residues 297–392 (VIFIDSSYIS…SLTHIMRKIP (96 aa)) enclose the MULE domain. Residues 584 to 620 (FEVLYNRSVGEVRCICSCFNFYGYLCRHALCVLNFNG) form an SWIM-type zinc finger.

It belongs to the FHY3/FAR1 family. In terms of tissue distribution, expressed in hypocotyls, rosette and cauline leaves, inflorescences stems, flowers and siliques.

The protein resides in the nucleus. Functionally, putative transcription activator involved in regulating light control of development. May have a role in controlling flowering time. The sequence is that of Protein FAR1-RELATED SEQUENCE 6 (FRS6) from Arabidopsis thaliana (Mouse-ear cress).